The chain runs to 344 residues: Follistatin (344 aa).

The signal sequence occupies residues 1–29; the sequence is MVRPRHQPGGLCLLLLLLCQFMEDRSAQA. The TB domain occupies 30-103; it reads GNCWLRQAKN…TCDNVDCGPG (74 aa). 18 cysteine pairs are disulfide-bonded: Cys-32-Cys-55, Cys-42-Cys-88, Cys-56-Cys-91, Cys-95-Cys-106, Cys-100-Cys-116, Cys-118-Cys-150, Cys-122-Cys-143, Cys-132-Cys-164, Cys-168-Cys-179, Cys-173-Cys-189, Cys-192-Cys-225, Cys-196-Cys-218, Cys-207-Cys-239, Cys-245-Cys-256, Cys-250-Cys-267, Cys-270-Cys-302, Cys-274-Cys-295, and Cys-284-Cys-316. One can recognise a Follistatin-like 1 domain in the interval 94 to 117; it reads TCDNVDCGPGKKCRMNKKNKPRCV. The 55-residue stretch at 112-166 folds into the Kazal-like 1 domain; sequence NKPRCVCAPDCSNITWKGPVCGLDGKTYRNECALLKARCKEQPELEVQYQGKCKK. Asn-124 carries an N-linked (GlcNAc...) asparagine glycan. A Follistatin-like 2 domain is found at 167–190; sequence TCRDVNCPGSSTCVVDQTNNAYCV. Residues 186–241 enclose the Kazal-like 2 domain; that stretch reads NAYCVTCNRICPEPTSSEQYLCGNDGVTYSSACHLRKATCLLGRSIGLAYEGKCIK. One can recognise a Follistatin-like 3 domain in the interval 244-268; sequence SCEDIQCTGGKKCLWDFKVGRGRCS. The region spanning 264 to 318 is the Kazal-like 3 domain; sequence RGRCSLCDELCPDSKSEEPVCASDNATYASECAMKEAACSSGVLLEVKHSGSCNS. A glycan (N-linked (GlcNAc...) asparagine) is linked at Asn-288. A disordered region spans residues 314 to 344; sequence GSCNSISEDTEEEEEDEDQDYSFPISSILEW. Residues 321–333 are compositionally biased toward acidic residues; that stretch reads EDTEEEEEDEDQD.

In terms of assembly, interacts with GDF11. Interacts with activin A/INHBA. Interacts with myostatin/MSTN.

The protein localises to the secreted. The protein resides in the nucleus. It localises to the nucleolus. Functionally, multifunctional regulatory protein whose primary function is to antagonize members of the transforming growth factor beta (TGF-beta) superfamily including activin, myostatin, GDF11 or bone morphogenetic proteins (BMPs). Mechanistically, binds to these ligands in the extracellular space, blocking their type II receptor-binding site to inhibit downstream signaling. Plays an essential role in muscle fiber formation and growth both by preventing the repressive effects of myostatin and through SMAD3/AKT/mTOR signaling independently of myostatin. Also promotes neural differentiation by antagonizing the action BMP4. Acts as a specific inhibitor of the biosynthesis and secretion of pituitary follicle stimulating hormone (FSH) by sequestering activin A/INHBA. On the other hand, translocates into the nucleus where it down-regulates rRNA synthesis and ribosome biogenesis to maintain cellular energy homeostasis by binding to rDNA. In Equus caballus (Horse), this protein is Follistatin.